Reading from the N-terminus, the 91-residue chain is Probable Fe(2+)-trafficking protein (91 aa).

It belongs to the Fe(2+)-trafficking protein family. Monomer.

Could be a mediator in iron transactions between iron acquisition and iron-requiring processes, such as synthesis and/or repair of Fe-S clusters in biosynthetic enzymes. The chain is Probable Fe(2+)-trafficking protein from Salmonella agona (strain SL483).